A 581-amino-acid polypeptide reads, in one-letter code: Chaperonin GroEL 1 (581 aa).

Residues 29-32 (TIGP), 86-90 (DGTTT), glycine 413, and aspartate 492 contribute to the ATP site. The tract at residues 522 to 541 (PEPEAAGPGGPGADPMGGMG) is disordered. Positions 528 to 541 (GPGGPGADPMGGMG) are enriched in gly residues.

It belongs to the chaperonin (HSP60) family. In terms of assembly, forms a cylinder of 14 subunits composed of two heptameric rings stacked back-to-back. Interacts with the co-chaperonin GroES.

The protein localises to the cytoplasm. It carries out the reaction ATP + H2O + a folded polypeptide = ADP + phosphate + an unfolded polypeptide.. Its function is as follows. Together with its co-chaperonin GroES, plays an essential role in assisting protein folding. The GroEL-GroES system forms a nano-cage that allows encapsulation of the non-native substrate proteins and provides a physical environment optimized to promote and accelerate protein folding. The protein is Chaperonin GroEL 1 of Prochlorococcus marinus (strain MIT 9301).